Reading from the N-terminus, the 252-residue chain is ATP synthase subunit a (252 aa).

7 helical membrane-spanning segments follow: residues 6–26 (LEQF…YFSF), 31–51 (LFML…TLNG), 88–108 (FFPL…IGMI), 117–137 (HFII…IVGF), 144–164 (FFSI…LVLL), 190–212 (LVKI…YLGQ), and 225–245 (LELG…CIYL).

The protein belongs to the ATPase A chain family. As to quaternary structure, F-type ATPases have 2 components, CF(1) - the catalytic core - and CF(0) - the membrane proton channel. CF(1) has five subunits: alpha(3), beta(3), gamma(1), delta(1), epsilon(1). CF(0) has three main subunits: a, b and c.

The protein localises to the mitochondrion inner membrane. In terms of biological role, mitochondrial membrane ATP synthase (F(1)F(0) ATP synthase or Complex V) produces ATP from ADP in the presence of a proton gradient across the membrane which is generated by electron transport complexes of the respiratory chain. F-type ATPases consist of two structural domains, F(1) - containing the extramembraneous catalytic core and F(0) - containing the membrane proton channel, linked together by a central stalk and a peripheral stalk. During catalysis, ATP synthesis in the catalytic domain of F(1) is coupled via a rotary mechanism of the central stalk subunits to proton translocation. Key component of the proton channel; it may play a direct role in the translocation of protons across the membrane. This chain is ATP synthase subunit a (ATP6), found in Marchantia polymorpha (Common liverwort).